Consider the following 166-residue polypeptide: FMN reductase (NADH) RutF (166 aa).

The protein belongs to the non-flavoprotein flavin reductase family. RutF subfamily.

It catalyses the reaction FMNH2 + NAD(+) = FMN + NADH + 2 H(+). In terms of biological role, catalyzes the reduction of FMN to FMNH2 which is used to reduce pyrimidine by RutA via the Rut pathway. In Cronobacter turicensis (strain DSM 18703 / CCUG 55852 / LMG 23827 / z3032), this protein is FMN reductase (NADH) RutF.